The following is a 448-amino-acid chain: Fumarate hydratase class II (448 aa).

Residues 83-85, 113-116, 123-125, and Thr171 each bind substrate; these read SGT, HPND, and SSN. The active-site Proton donor/acceptor is the His172. Ser302 is an active-site residue. Residues Ser303 and 308-310 contribute to the substrate site; that span reads KVN.

It belongs to the class-II fumarase/aspartase family. Fumarase subfamily. As to quaternary structure, homotetramer.

It localises to the cytoplasm. The enzyme catalyses (S)-malate = fumarate + H2O. Its pathway is carbohydrate metabolism; tricarboxylic acid cycle; (S)-malate from fumarate: step 1/1. In terms of biological role, involved in the TCA cycle. Catalyzes the stereospecific interconversion of fumarate to L-malate. In Blochmanniella floridana, this protein is Fumarate hydratase class II.